Here is a 268-residue protein sequence, read N- to C-terminus: Cytolethal distending toxin subunit A (268 aa).

The signal sequence occupies residues 1-19 (MQKIIVFILCCFMTFFLYA). C20 is lipidated: N-palmitoyl cysteine. C20 is lipidated: S-diacylglycerol cysteine. The region spanning 112–252 (VSDFLTILGP…DNFDQQWFLT (141 aa)) is the Ricin B-type lectin domain. The interval 129–140 (WALAQGNWIWGY) is mediates binding to target cells.

As to quaternary structure, heterotrimer of 3 subunits, CdtA, CdtB and CdtC.

It is found in the cell outer membrane. CDTs are cytotoxins which induce cell distension, growth arrest in G2/M phase, nucleus swelling, and chromatin fragmentation in HeLa cells. The chain is Cytolethal distending toxin subunit A (cdtA) from Campylobacter jejuni subsp. jejuni serotype O:2 (strain ATCC 700819 / NCTC 11168).